Reading from the N-terminus, the 265-residue chain is uncharacterized protein (265 aa).

2 CBS domains span residues 9–64 (MTKK…EKVE) and 67–126 (MTKR…TTPK).

This is an uncharacterized protein from Methanocaldococcus jannaschii (strain ATCC 43067 / DSM 2661 / JAL-1 / JCM 10045 / NBRC 100440) (Methanococcus jannaschii).